A 218-amino-acid chain; its full sequence is uncharacterized protein (218 aa).

This is an uncharacterized protein from Caenorhabditis elegans.